The sequence spans 132 residues: MELEHPDDLYYLDSHEYVRFDGETATIGLSAFAVDELGDIVFVELPEEGDKVEFEQSMGAVESVKAASDLYSPVTGTVIEKNSALEDQPELLNQDPYGEEGWLIKVRLDDVEDAKEGLMAAGDYRATLETGD.

A Lipoyl-binding domain is found at 24–107 (TATIGLSAFA…GEEGWLIKVR (84 aa)). Lysine 65 bears the N6-lipoyllysine mark.

This sequence belongs to the GcvH family. The glycine cleavage system is composed of four proteins: P, T, L and H. (R)-lipoate serves as cofactor.

Functionally, the glycine cleavage system catalyzes the degradation of glycine. The H protein shuttles the methylamine group of glycine from the P protein to the T protein. This Synechocystis sp. (strain ATCC 27184 / PCC 6803 / Kazusa) protein is Glycine cleavage system H protein.